The chain runs to 182 residues: Probable pyruvoyl-dependent arginine decarboxylase (182 aa).

Position 43 is a pyruvic acid (Ser) (serine 43).

It belongs to the PdaD family. Pyruvate is required as a cofactor.

It catalyses the reaction L-arginine + H(+) = agmatine + CO2. In Chloroherpeton thalassium (strain ATCC 35110 / GB-78), this protein is Probable pyruvoyl-dependent arginine decarboxylase.